Here is a 444-residue protein sequence, read N- to C-terminus: Beta-D-glucosyl crocetin beta-1,6-glucosyltransferase (444 aa).

Histidine 9 (proton acceptor) is an active-site residue. Histidine 9 contributes to the an anthocyanidin binding site. Aspartate 108 (charge relay) is an active-site residue. Residues threonine 130, alanine 319, glutamine 321, histidine 336, tryptophan 339, asparagine 340, serine 341, glutamate 344, aspartate 360, and glutamine 361 each contribute to the UDP-alpha-D-glucose site.

It belongs to the UDP-glycosyltransferase family. Ubiquitous.

It carries out the reaction beta-D-glucosyl crocetin + UDP-alpha-D-glucose = beta-D-gentiobiosyl crocetin + UDP + H(+). The catalysed reaction is bis(beta-D-glucosyl) crocetin + UDP-alpha-D-glucose = beta-D-gentiobiosyl beta-D-glucosyl crocetin + UDP + H(+). The enzyme catalyses beta-D-gentiobiosyl beta-D-glucosyl crocetin + UDP-alpha-D-glucose = bis(beta-D-gentiobiosyl) crocetin + UDP + H(+). Its function is as follows. Glucosyltransferase catalyzing the beta 1-6 glucosylation of the sugar moiety of crocetin glucosyl esters to produce crocetin gentiobiosyl esters. Weak activity toward curcumin glucosides, but no activity with flavonoid glucosides, coumarin glucosides, 4-nitrophenyl glucoside or crocetin. Involved with UGT75L6 in sequential glycosylation of crocetin to crocin (bis(beta-D-gentiobiosyl) crocetin). The polypeptide is Beta-D-glucosyl crocetin beta-1,6-glucosyltransferase (UGT94E5) (Gardenia jasminoides (Cape jasmine)).